The sequence spans 249 residues: tRNA pseudouridine synthase A (249 aa).

Catalysis depends on D54, which acts as the Nucleophile. Y111 is a binding site for substrate.

The protein belongs to the tRNA pseudouridine synthase TruA family. Homodimer.

The catalysed reaction is uridine(38/39/40) in tRNA = pseudouridine(38/39/40) in tRNA. Its function is as follows. Formation of pseudouridine at positions 38, 39 and 40 in the anticodon stem and loop of transfer RNAs. The protein is tRNA pseudouridine synthase A of Mycoplasma capricolum subsp. capricolum (strain California kid / ATCC 27343 / NCTC 10154).